The chain runs to 273 residues: Testis-specific serine/threonine-protein kinase 6 (273 aa).

The Protein kinase domain maps to 12–267 (YKLGRTIGEG…AGQVARNGWL (256 aa)). Residues 18 to 26 (IGEGSYSKV) and Lys41 each bind ATP. The active-site Proton acceptor is Asp135.

This sequence belongs to the protein kinase superfamily. CAMK Ser/Thr protein kinase family. As to quaternary structure, microtubule inner protein component of sperm flagellar doublet microtubules. Interacts with HSP90; this interaction stabilizes and activates TSSK6. Interacts with the heat shock proteins HSPCB, HSPA8 and HSPA1A. These interactions appear to be required for TSSK6 kinase activity. Interacts with TSACC; this interaction is direct and recruits TSACC to HSP90, which is essential for kinase activity. It depends on Mg(2+) as a cofactor. Post-translationally, autophosphorylated. Ubiquitinated; HSP90 activity negatively regulates ubiquitination and degradation. As to expression, expressed in the testis, localized to the heads of elongating spermatids.

The protein resides in the cytoplasm. The protein localises to the cytoskeleton. It is found in the flagellum axoneme. Its subcellular location is the nucleus. The catalysed reaction is L-seryl-[protein] + ATP = O-phospho-L-seryl-[protein] + ADP + H(+). It carries out the reaction L-threonyl-[protein] + ATP = O-phospho-L-threonyl-[protein] + ADP + H(+). Its function is as follows. Serine/threonine-protein kinase component of the sperm flagellar doublet microtubules. May act as a regulator of sperm motility by mediating phosphorylation of sperm doublet microtubule proteins. Plays a role in DNA condensation during postmeiotic chromatin remodeling and histone-to-protamine transition during spermatogenesis. The protein is Testis-specific serine/threonine-protein kinase 6 of Mus musculus (Mouse).